A 351-amino-acid chain; its full sequence is Histidinol-phosphate aminotransferase (351 aa).

Lys221 is subject to N6-(pyridoxal phosphate)lysine.

The protein belongs to the class-II pyridoxal-phosphate-dependent aminotransferase family. Histidinol-phosphate aminotransferase subfamily. As to quaternary structure, homodimer. Pyridoxal 5'-phosphate serves as cofactor.

The catalysed reaction is L-histidinol phosphate + 2-oxoglutarate = 3-(imidazol-4-yl)-2-oxopropyl phosphate + L-glutamate. Its pathway is amino-acid biosynthesis; L-histidine biosynthesis; L-histidine from 5-phospho-alpha-D-ribose 1-diphosphate: step 7/9. The polypeptide is Histidinol-phosphate aminotransferase (Staphylococcus epidermidis (strain ATCC 35984 / DSM 28319 / BCRC 17069 / CCUG 31568 / BM 3577 / RP62A)).